Consider the following 313-residue polypeptide: Acetyl-coenzyme A carboxylase carboxyl transferase subunit alpha (313 aa).

A CoA carboxyltransferase C-terminal domain is found at 36–286 (RLDKEVKTIY…KEYFLDTLRT (251 aa)).

Belongs to the AccA family. Acetyl-CoA carboxylase is a heterohexamer composed of biotin carboxyl carrier protein (AccB), biotin carboxylase (AccC) and two subunits each of ACCase subunit alpha (AccA) and ACCase subunit beta (AccD).

The protein localises to the cytoplasm. It catalyses the reaction N(6)-carboxybiotinyl-L-lysyl-[protein] + acetyl-CoA = N(6)-biotinyl-L-lysyl-[protein] + malonyl-CoA. It participates in lipid metabolism; malonyl-CoA biosynthesis; malonyl-CoA from acetyl-CoA: step 1/1. Functionally, component of the acetyl coenzyme A carboxylase (ACC) complex. First, biotin carboxylase catalyzes the carboxylation of biotin on its carrier protein (BCCP) and then the CO(2) group is transferred by the carboxyltransferase to acetyl-CoA to form malonyl-CoA. In Helicobacter acinonychis (strain Sheeba), this protein is Acetyl-coenzyme A carboxylase carboxyl transferase subunit alpha.